Consider the following 559-residue polypeptide: MGLCVRSSINIPYFHYAMIYLDNMGRLKVMESPSIQEQNETVFTTEVRERFLEILGAKVGYQPPMVRSIYDPQQPLGCLSYRQTKRDRNSPAHSMYGVPPSVQFSAPVEESPSCGSVDMVGLEIGDTPNVLDYYERSLKHFRQVNCRQILKTFIKFIEPRKQAKHPYNGGKPPAGAPPGKKGDPEKTKPEWWPANVVHKEPDHLRKDRTCNPSENLQCQVTLLTDLERLSLLIHIIRRLGRFGITTDQLQEIAHDCKRRLSDPHKLQILDEVFRVRRIEERYERGEVDANKIVYVVNRESNQKEKDGDSNVDPDQKHEQEDDNAREALPILHSEKNSTSPMSNSAEHTGMAAPSRPMNMGGDRNQLFPLPEWPSFGETPQDDRIFFPTTSKYTEDYASQQMPRTPATTALVSTNETHAAFDYMTQESITSSSPEQTSHHRQAPLPMQHSASLDPWTPTFRHNFFNPMVYSTAPRHAMSQATMLSQFPRSTTSHGQEMPHMAHGLPNLPQDRPSSMDGMSMRGPSFRTGFLSHPCDPSQQAPHSSGCGHPDSWTQNRPHV.

Disordered stretches follow at residues 163-190 (AKHP…TKPE), 298-351 (RESN…TGMA), 427-451 (SITS…HSAS), and 525-559 (FRTG…RPHV). Residues 169 to 179 (GGKPPAGAPPG) show a composition bias toward low complexity. Basic and acidic residues-rich tracts occupy residues 180–189 (KKGDPEKTKP) and 300–325 (SNQK…DNAR). A compositionally biased stretch (polar residues) spans 336–346 (NSTSPMSNSAE).

Its function is as follows. Part of the subtelomeric hrmA-associated cluster (HAC) containing genes that alter the hyphal surface (such as reduced total chitin or increased beta-glucan exposure) and perturb inter-hyphal interactions within the developing biofilms, resulting in a loss of vertically aligned polarized growing filaments. Consequently, this hypoxia-typic morphotype (called H-MORPH) with altered biofilm architecture leads to increased hypoxia fitness, increased host inflammation, rapid disease progression, and mortality in a murine model of invasive aspergillosis. This Aspergillus fumigatus (strain CBS 144.89 / FGSC A1163 / CEA10) (Neosartorya fumigata) protein is Subtelomeric hrmA-associated cluster protein AFUB_079030.